A 1364-amino-acid chain; its full sequence is DNA-directed RNA polymerase subunit beta' (1364 aa).

The disordered stretch occupies residues 1-42 (MTSSSSKSNKSRKSSKAAKDTTPVHESASRPLSKTPPPFRNH). Cysteine 250, cysteine 317, cysteine 324, and cysteine 327 together coordinate Zn(2+).

Belongs to the RNA polymerase beta' chain family. RpoC2 subfamily. As to quaternary structure, in cyanobacteria the RNAP catalytic core is composed of 2 alpha, 1 beta, 1 beta', 1 gamma and 1 omega subunit. When a sigma factor is associated with the core the holoenzyme is formed, which can initiate transcription. Zn(2+) is required as a cofactor.

The enzyme catalyses RNA(n) + a ribonucleoside 5'-triphosphate = RNA(n+1) + diphosphate. In terms of biological role, DNA-dependent RNA polymerase catalyzes the transcription of DNA into RNA using the four ribonucleoside triphosphates as substrates. The sequence is that of DNA-directed RNA polymerase subunit beta' from Parasynechococcus marenigrum (strain WH8102).